Reading from the N-terminus, the 184-residue chain is Peptide deformylase (184 aa).

Positions 111 and 154 each coordinate Fe cation. Glutamate 155 is a catalytic residue. Residue histidine 158 participates in Fe cation binding.

It belongs to the polypeptide deformylase family. The cofactor is Fe(2+).

The catalysed reaction is N-terminal N-formyl-L-methionyl-[peptide] + H2O = N-terminal L-methionyl-[peptide] + formate. Removes the formyl group from the N-terminal Met of newly synthesized proteins. Requires at least a dipeptide for an efficient rate of reaction. N-terminal L-methionine is a prerequisite for activity but the enzyme has broad specificity at other positions. In Pediococcus pentosaceus (strain ATCC 25745 / CCUG 21536 / LMG 10740 / 183-1w), this protein is Peptide deformylase.